The following is a 168-amino-acid chain: CASP-like protein UU-1 (168 aa).

The Cytoplasmic portion of the chain corresponds to 1–17 (MVELESQEAVTVASTAD). A helical membrane pass occupies residues 18-38 (IAVDVSLRLLAAATSLAAAVV). Over 39-54 (VAANHQQRWGIRVDFT) the chain is Extracellular. A helical membrane pass occupies residues 55 to 75 (LFQVWIGFVAVNLVCTVYAAA). The Cytoplasmic portion of the chain corresponds to 76-95 (TAAAAARKAMGRWWLHHADA). The chain crosses the membrane as a helical span at residues 96–116 (VVVNLEAAATAGAGAIGSIAM). Residues 117-136 (WGNEASGWYAVCRLYRRYCN) lie on the Extracellular side of the membrane. The helical transmembrane segment at 137-157 (AGAAALALSLAAVLLLGVACA) threads the bilayer. Residues 158 to 168 (RSRYPKMPPTT) are Cytoplasmic-facing.

This sequence belongs to the Casparian strip membrane proteins (CASP) family. As to quaternary structure, homodimer and heterodimers.

It is found in the cell membrane. In Oryza sativa subsp. japonica (Rice), this protein is CASP-like protein UU-1.